The primary structure comprises 47 residues: Photosystem II reaction center protein K (47 aa).

Positions 1-10 are excised as a propeptide; the sequence is MAAFTLDLMA. The chain crosses the membrane as a helical span at residues 20–40; the sequence is APAVDVLPLIPIFFFLLVFVW.

This sequence belongs to the PsbK family. In terms of assembly, PSII is composed of 1 copy each of membrane proteins PsbA, PsbB, PsbC, PsbD, PsbE, PsbF, PsbH, PsbI, PsbJ, PsbK, PsbL, PsbM, PsbT, PsbX, PsbY, Psb30/Ycf12, peripheral proteins PsbO, CyanoQ (PsbQ), PsbU, PsbV and a large number of cofactors. It forms dimeric complexes.

Its subcellular location is the cellular thylakoid membrane. In terms of biological role, one of the components of the core complex of photosystem II (PSII). PSII is a light-driven water:plastoquinone oxidoreductase that uses light energy to abstract electrons from H(2)O, generating O(2) and a proton gradient subsequently used for ATP formation. It consists of a core antenna complex that captures photons, and an electron transfer chain that converts photonic excitation into a charge separation. The sequence is that of Photosystem II reaction center protein K from Prochlorococcus marinus (strain MIT 9303).